Reading from the N-terminus, the 192-residue chain is Fe/S biogenesis protein NfuA (192 aa).

[4Fe-4S] cluster contacts are provided by Cys-149 and Cys-152.

Belongs to the NfuA family. As to quaternary structure, homodimer. Requires [4Fe-4S] cluster as cofactor.

Its function is as follows. Involved in iron-sulfur cluster biogenesis. Binds a 4Fe-4S cluster, can transfer this cluster to apoproteins, and thereby intervenes in the maturation of Fe/S proteins. Could also act as a scaffold/chaperone for damaged Fe/S proteins. This Shewanella loihica (strain ATCC BAA-1088 / PV-4) protein is Fe/S biogenesis protein NfuA.